A 354-amino-acid polypeptide reads, in one-letter code: Sulfate permease CysP (354 aa).

8 helical membrane-spanning segments follow: residues 3-23 (LAAI…GAAA), 40-60 (ALIL…GEVV), 77-97 (IVCI…LLGI), 125-145 (LIIV…TYFV), 164-184 (ILGI…GMNN), 197-217 (VLDV…GALL), 293-313 (VWIV…SLFL), and 320-340 (IFIM…TKAI).

This sequence belongs to the inorganic phosphate transporter (PiT) (TC 2.A.20) family.

The protein resides in the cell membrane. Functionally, involved in the import of sulfate. The protein is Sulfate permease CysP (cysP) of Bacillus subtilis (strain 168).